Consider the following 852-residue polypeptide: Gamma-tubulin complex component 2 homolog (852 aa).

Serine 73 bears the Phosphoserine mark.

The protein belongs to the TUBGCP family. Gamma-tubulin small complex (Gamma TuSC) is a heterotetrameric complex which contains two molecules of gamma-tubulin, and one molecule each of Dgrip84 and Dgrip91. The gamma-tubulin in this complex binds preferentially to GDP over GTP.

The protein localises to the cytoplasm. The protein resides in the cytoskeleton. It localises to the microtubule organizing center. Its subcellular location is the centrosome. It is found in the perinuclear region. The chain is Gamma-tubulin complex component 2 homolog (Grip84) from Drosophila melanogaster (Fruit fly).